The chain runs to 541 residues: Histone acetyltransferase ESA1 (541 aa).

The span at 1-11 shows a compositional bias: basic and acidic residues; it reads MAVAEIKKEKG. A disordered region spans residues 1–31; sequence MAVAEIKKEKGSSLSPEPSSPIQILSTEPDA. The segment covering 12 to 30 has biased composition (polar residues); it reads SSLSPEPSSPIQILSTEPD. The 51-residue stretch at 47 to 97 folds into the Tudor-knot domain; that stretch reads PGCKVHVSKDGEFRLAEILQEHIKKGRKVFYVHYQDFNKRLDEWIELDRID. The tract at residues 111 to 154 is disordered; the sequence is TKENKSKKKSKSKGQTKLSKNNTTANSTTGTPQPSDGQPIMGDD. Residues 115 to 124 show a composition bias toward basic residues; it reads KSKKKSKSKG. Positions 131–146 are enriched in polar residues; it reads NNTTANSTTGTPQPSD. In terms of domain architecture, MYST-type HAT spans 196–529; sequence ARVRNLSTII…LNPKLLHWTP (334 aa). The C2HC MYST-type; degenerate zinc-finger motif lies at 229-254; the sequence is IYICDFTLSYFGSKKQFERFRSKCSM. The short motif at 279-300 is the ESA1-RPD3 motif element; it reads RTWCRNLCLLSKLFLDHKTLYY. At Lys-296 the chain carries N6-acetyllysine; by autocatalysis. Acetyl-CoA contacts are provided by residues 337-341 and 346-352; these read ACILT and QKRGFGK. Glu-372 functions as the Proton donor/acceptor in the catalytic mechanism. Ser-376 is an acetyl-CoA binding site. The tract at residues 413-438 is disordered; the sequence is YDEAENGKDSSATPTPGPGSNASQSS.

This sequence belongs to the MYST (SAS/MOZ) family. As to quaternary structure, component of the NuA4 histone acetyltransferase complex. Autoacetylation at Lys-296 is required for proper function.

The protein resides in the nucleus. The protein localises to the chromosome. It carries out the reaction L-lysyl-[histone] + acetyl-CoA = N(6)-acetyl-L-lysyl-[histone] + CoA + H(+). The catalysed reaction is L-lysyl-[protein] + acetyl-CoA = N(6)-acetyl-L-lysyl-[protein] + CoA + H(+). The enzyme catalyses 2-hydroxyisobutanoyl-CoA + L-lysyl-[protein] = N(6)-(2-hydroxyisobutanoyl)-L-lysyl-[protein] + CoA + H(+). It catalyses the reaction (2E)-butenoyl-CoA + L-lysyl-[protein] = N(6)-(2E)-butenoyl-L-lysyl-[protein] + CoA + H(+). Functionally, catalytic component of the NuA4 histone acetyltransferase (HAT) complex which is involved in epigenetic transcriptional activation of selected genes principally by acetylation of nucleosomal histones H4, H3, H2B, H2A and H2A variant H2A.Z. Acetylates histone H4 to form H4K5ac, H4K8ac, H4K12ac and H4K16ac, histone H3 to form H3K14ac, and histone H2A to form H2AK4ac and H2AK7ac. The NuA4 complex is involved in the DNA damage response and is required for chromosome segregation. The NuA4 complex plays a direct role in repair of DNA double-strand breaks (DSBs) through homologous recombination. Recruitment to promoters depends on H3K4me. Also acetylates non-histone proteins. In addition to protein acetyltransferase, can use different acyl-CoA substrates, such as 2-hydroxyisobutanoyl-CoA (2-hydroxyisobutyryl-CoA) or (2E)-butenoyl-CoA (crotonyl-CoA), and is able to mediate protein 2-hydroxyisobutyrylation and crotonylation, respectively. This Candida albicans (strain SC5314 / ATCC MYA-2876) (Yeast) protein is Histone acetyltransferase ESA1 (ESA1).